We begin with the raw amino-acid sequence, 238 residues long: Ribosomal RNA small subunit methyltransferase G (238 aa).

Residues G77, F82, 128-129, and R147 each bind S-adenosyl-L-methionine; that span reads AE.

Belongs to the methyltransferase superfamily. RNA methyltransferase RsmG family.

The protein resides in the cytoplasm. Its function is as follows. Specifically methylates the N7 position of guanine in position 535 of 16S rRNA. This is Ribosomal RNA small subunit methyltransferase G from Listeria welshimeri serovar 6b (strain ATCC 35897 / DSM 20650 / CCUG 15529 / CIP 8149 / NCTC 11857 / SLCC 5334 / V8).